Consider the following 322-residue polypeptide: Nitrilase (322 aa).

Residues 5–283 (VRVGAVQSEP…EAILTADIDL (279 aa)) form the CN hydrolase domain. The active-site Proton acceptor is Glu-45. Lys-127 is an active-site residue. Cys-162 functions as the Nucleophile in the catalytic mechanism.

The protein belongs to the carbon-nitrogen hydrolase superfamily. Nitrilase family.

The catalysed reaction is a nitrile + 2 H2O = a carboxylate + NH4(+). Its function is as follows. Nitrilase that hydrolyzes preferentially 4-cyanopyridine. The polypeptide is Nitrilase (Talaromyces marneffei (strain ATCC 18224 / CBS 334.59 / QM 7333) (Penicillium marneffei)).